The primary structure comprises 68 residues: Large ribosomal subunit protein bL35 (68 aa).

This sequence belongs to the bacterial ribosomal protein bL35 family.

This is Large ribosomal subunit protein bL35 from Onion yellows phytoplasma (strain OY-M).